A 305-amino-acid chain; its full sequence is MMNVAVTATPSSLLYSPLLLPSQGPNRRMQWKRNGKRRLGTKVAVSGVITAGFELKPPPYPLDALEPHMSRETLDYHWGKHHKTYVENLNKQILGTDLDALSLEEVVLLSYNKGNMLPAFNNAAQAWNHEFFWESIQPGGGGKPTGELLRLIERDFGSFEEFLERFKSAAASNFGSGWTWLAYKANRLDVANAVNPLPKEEDKKLVIVKTPNAVNPLVWDYSPLLTIDTWEHAYYLDFENRRAEYINTFMEKLVSWETVSTRLESAIARAVQREQEGTETEDEENPDDEVPEVYLDSDIDVSEVD.

Residues 1 to 46 (MMNVAVTATPSSLLYSPLLLPSQGPNRRMQWKRNGKRRLGTKVAVS) constitute a chloroplast transit peptide. Positions 77, 129, 228, and 232 each coordinate Fe cation. The segment at 270–305 (AVQREQEGTETEDEENPDDEVPEVYLDSDIDVSEVD) is disordered. Positions 277 to 305 (GTETEDEENPDDEVPEVYLDSDIDVSEVD) are enriched in acidic residues.

Belongs to the iron/manganese superoxide dismutase family. As to quaternary structure, heterodimer with FSD3. Interacts with MRL7 and PRDA1. The cofactor is Fe cation.

The protein resides in the plastid. It is found in the chloroplast thylakoid. The catalysed reaction is 2 superoxide + 2 H(+) = H2O2 + O2. With respect to regulation, activated by cpn20/cpn21 (in vitro). In terms of biological role, destroys superoxide anion radicals which are normally produced within the cells and which are toxic to biological systems. Plays important role in chloroplast development, particularly in the maintenance of thylakoids membranes. Seems to act as a heterodimer with FSD3. This is Superoxide dismutase [Fe] 2, chloroplastic (FSD2) from Arabidopsis thaliana (Mouse-ear cress).